We begin with the raw amino-acid sequence, 209 residues long: Protein ASG7 (209 aa).

The Lumenal segment spans residues 1-49 (MTTLASSIEHKTKHLAAPFENDENTWMKKYCCQCKSCKMSVPVQPWLPR). A helical transmembrane segment spans residues 50 to 70 (FFVFGILCPVFWLVNLLAWWF). Residues 71–184 (LQYWQPHELE…LLRKTFRNWN (114 aa)) lie on the Cytoplasmic side of the membrane. Residues S121, S123, and S125 each carry the phosphoserine modification. T153 carries the phosphothreonine modification. The helical transmembrane segment at 185–205 (LRSLLGLLIDSILIIFVVLLC) threads the bilayer. At 206–209 (KKSR) the chain is on the lumenal side.

It is found in the endomembrane system. Functionally, required for receptor inhibition of inappropriately expressed a-factor receptor (STE3) in MAT a cells. Inhibits signaling by relocalizing the G protein beta-gamma (STE4-STE18) subunit to intracellular membranes. May also be a mechanism for the down-regulation of the mating pheromone response after the zygotic fusion event, promoting the transition of the new diploid cell to vegetative growth. In Saccharomyces cerevisiae (strain YJM789) (Baker's yeast), this protein is Protein ASG7 (ASG7).